Consider the following 361-residue polypeptide: Chorismate synthase (361 aa).

Positions 48 and 54 each coordinate NADP(+). FMN is bound by residues 125 to 127 (RSS), 238 to 239 (NA), Gly278, 293 to 297 (KPTSS), and Arg319.

The protein belongs to the chorismate synthase family. Homotetramer. It depends on FMNH2 as a cofactor.

It carries out the reaction 5-O-(1-carboxyvinyl)-3-phosphoshikimate = chorismate + phosphate. It participates in metabolic intermediate biosynthesis; chorismate biosynthesis; chorismate from D-erythrose 4-phosphate and phosphoenolpyruvate: step 7/7. Catalyzes the anti-1,4-elimination of the C-3 phosphate and the C-6 proR hydrogen from 5-enolpyruvylshikimate-3-phosphate (EPSP) to yield chorismate, which is the branch point compound that serves as the starting substrate for the three terminal pathways of aromatic amino acid biosynthesis. This reaction introduces a second double bond into the aromatic ring system. This Vibrio campbellii (strain ATCC BAA-1116) protein is Chorismate synthase.